We begin with the raw amino-acid sequence, 397 residues long: uncharacterized protein (397 aa).

4 consecutive transmembrane segments (helical) span residues tryptophan 142–alanine 162, serine 191–leucine 211, alanine 242–leucine 258, and alanine 260–phenylalanine 280.

This sequence belongs to the cation diffusion facilitator (CDF) transporter (TC 2.A.4) family. SLC30A subfamily.

It localises to the membrane. This is an uncharacterized protein from Schizosaccharomyces pombe (strain 972 / ATCC 24843) (Fission yeast).